The primary structure comprises 633 residues: ATP-dependent zinc metalloprotease FtsH (633 aa).

The Cytoplasmic segment spans residues 1 to 19 (MTPSNEPGKQDQIPQPGPT). A helical membrane pass occupies residues 20-40 (IPNQYSFLWLSAAIFLMFLWL). Residues 41-133 (QGNNQQQQQE…SRSGRPWWQE (93 aa)) lie on the Periplasmic side of the membrane. The helical transmembrane segment at 134–154 (LILGFLPWILLLALMFWFWGA) threads the bilayer. Topologically, residues 155–633 (AQKRMTQGGG…LEEARSRETA (479 aa)) are cytoplasmic. ATP is bound at residue 226–233 (GPPGTGKT). H447 provides a ligand contact to Zn(2+). Residue E448 is part of the active site. Positions 451 and 523 each coordinate Zn(2+).

It in the central section; belongs to the AAA ATPase family. The protein in the C-terminal section; belongs to the peptidase M41 family. As to quaternary structure, homohexamer. The cofactor is Zn(2+).

The protein resides in the cell inner membrane. Acts as a processive, ATP-dependent zinc metallopeptidase for both cytoplasmic and membrane proteins. Plays a role in the quality control of integral membrane proteins. The polypeptide is ATP-dependent zinc metalloprotease FtsH (Marinobacter nauticus (strain ATCC 700491 / DSM 11845 / VT8) (Marinobacter aquaeolei)).